A 232-amino-acid polypeptide reads, in one-letter code: UPF0758 protein Amet_2289 (232 aa).

The MPN domain maps to 110–232; it reads RIKSPDDVSN…YYSLKEKSMM (123 aa). His-181, His-183, and Asp-194 together coordinate Zn(2+). The JAMM motif motif lies at 181 to 194; it reads HNHPSGDPSPSGED.

This sequence belongs to the UPF0758 family.

The sequence is that of UPF0758 protein Amet_2289 from Alkaliphilus metalliredigens (strain QYMF).